The chain runs to 669 residues: Acetyl-coenzyme A synthetase (669 aa).

CoA-binding positions include 211-214 (RGGK) and Thr-329. Residues 404 to 406 (GEP), 428 to 433 (DTYWQT), Asp-519, and Arg-534 each bind ATP. CoA is bound at residue Ser-542. ATP is bound at residue Arg-545. Arg-602 is a binding site for CoA.

The protein belongs to the ATP-dependent AMP-binding enzyme family.

The catalysed reaction is acetate + ATP + CoA = acetyl-CoA + AMP + diphosphate. The protein operates within ketone degradation; acetoin degradation. It participates in antibiotic biosynthesis; penicillin biosynthesis. The protein is Acetyl-coenzyme A synthetase (facA) of Penicillium chrysogenum (Penicillium notatum).